Reading from the N-terminus, the 670-residue chain is DNA ligase (670 aa).

Residues 35-39, 84-85, and E116 each bind NAD(+); these read DSVYD and SL. The N6-AMP-lysine intermediate role is filled by K118. Residues R139, E176, K293, and K317 each coordinate NAD(+). 4 residues coordinate Zn(2+): C411, C414, C429, and C435. Positions 592-670 constitute a BRCT domain; that stretch reads VVKSEIAGKT…EEAFLKLLKS (79 aa).

Belongs to the NAD-dependent DNA ligase family. LigA subfamily. Mg(2+) serves as cofactor. The cofactor is Mn(2+).

The enzyme catalyses NAD(+) + (deoxyribonucleotide)n-3'-hydroxyl + 5'-phospho-(deoxyribonucleotide)m = (deoxyribonucleotide)n+m + AMP + beta-nicotinamide D-nucleotide.. Functionally, DNA ligase that catalyzes the formation of phosphodiester linkages between 5'-phosphoryl and 3'-hydroxyl groups in double-stranded DNA using NAD as a coenzyme and as the energy source for the reaction. It is essential for DNA replication and repair of damaged DNA. This chain is DNA ligase, found in Coxiella burnetii (strain Dugway 5J108-111).